A 155-amino-acid chain; its full sequence is dCTP deaminase (155 aa).

DCTP contacts are provided by residues 79 to 84, aspartate 95, glutamine 124, and tyrosine 138; that span reads RSSLAR.

The protein belongs to the dCTP deaminase family. In terms of assembly, homotrimer.

The enzyme catalyses dCTP + H2O + H(+) = dUTP + NH4(+). Its pathway is pyrimidine metabolism; dUMP biosynthesis; dUMP from dCTP (dUTP route): step 1/2. In terms of biological role, catalyzes the deamination of dCTP to dUTP. In Thermococcus kodakarensis (strain ATCC BAA-918 / JCM 12380 / KOD1) (Pyrococcus kodakaraensis (strain KOD1)), this protein is dCTP deaminase.